Consider the following 169-residue polypeptide: Ribosome maturation factor RimM (169 aa).

The 75-residue stretch at 92 to 166 folds into the PRC barrel domain; that stretch reads NKEYYWNDIF…IVIDLTNLNN (75 aa).

The protein belongs to the RimM family. In terms of assembly, binds ribosomal protein uS19.

The protein resides in the cytoplasm. Functionally, an accessory protein needed during the final step in the assembly of 30S ribosomal subunit, possibly for assembly of the head region. Essential for efficient processing of 16S rRNA. May be needed both before and after RbfA during the maturation of 16S rRNA. It has affinity for free ribosomal 30S subunits but not for 70S ribosomes. This Buchnera aphidicola subsp. Cinara cedri (strain Cc) protein is Ribosome maturation factor RimM.